Here is a 3227-residue protein sequence, read N- to C-terminus: E3 ubiquitin-protein ligase ptr1 (3227 aa).

Disordered stretches follow at residues 1806–1836 (SGAA…PPDL), 1869–1894 (MEFE…VMYS), 1908–1929 (QDAS…GDVI), and 2577–2607 (ATTG…KDKK). Residues 1811–1823 (DSMGDQSLSSSSE) are compositionally biased toward low complexity. A compositionally biased stretch (acidic residues) spans 1883–1894 (VSEDDADDVMYS). Over residues 2577–2601 (ATTGYTNDQDSRGSTVPKQDPGTTA) the composition is skewed to polar residues. Positions 2891-3227 (DADEVKFSKL…NEGSEGFGFA (337 aa)) constitute an HECT domain. Cys3194 acts as the Glycyl thioester intermediate in catalysis.

Belongs to the UPL family. TOM1/PTR1 subfamily.

Its subcellular location is the nucleus. It carries out the reaction S-ubiquitinyl-[E2 ubiquitin-conjugating enzyme]-L-cysteine + [acceptor protein]-L-lysine = [E2 ubiquitin-conjugating enzyme]-L-cysteine + N(6)-ubiquitinyl-[acceptor protein]-L-lysine.. It participates in protein modification; protein ubiquitination. Functionally, probable ubiquitin ligase protein involved in mRNA export. E3 ubiquitin ligase proteins mediate ubiquitination and subsequent proteasomal degradation of target proteins. Probably participates in mRNA export from the nucleus by regulating the transport of hnRNP proteins such as rae1. This chain is E3 ubiquitin-protein ligase ptr1 (ptr1), found in Schizosaccharomyces pombe (strain 972 / ATCC 24843) (Fission yeast).